A 334-amino-acid chain; its full sequence is Chorismatase (334 aa).

Residues Y143, R150, Y203, and R216 each contribute to the substrate site. E328 functions as the Proton acceptor in the catalytic mechanism.

Belongs to the FkbO/Hyg5 family. As to quaternary structure, monomer.

It carries out the reaction chorismate + H2O = (3R,4R)-3,4-dihydroxy-3,4-dihydrobenzoate + pyruvate. Functionally, involved in the biosynthesis of the macrocyclic amino acid-linked polyketides rapamycin which is a potent immunosuppressant that prevents T-cell proliferation through initial binding to the immunophilin FKBP12. Catalyzes the hydrolysis of chorismate via a 1,4-conjugate elimination of water to yield (4R,5R)-4,5-dihydroxycyclohexa-1,5-dienecarboxylic acid (DCDC). This is Chorismatase (rapK) from Streptomyces rapamycinicus (strain ATCC 29253 / DSM 41530 / NRRL 5491 / AYB-994) (Streptomyces hygroscopicus (strain ATCC 29253)).